Consider the following 511-residue polypeptide: Piperic acid synthase CYP719A37 (511 aa).

Residues Val-7–Leu-27 traverse the membrane as a helical segment. Cys-455 provides a ligand contact to heme.

The protein belongs to the cytochrome P450 family. Requires heme as cofactor. Specifically expressed in immature fruits and roots. Barely detectable in young leaves and flowering spadices.

It is found in the membrane. The protein localises to the endoplasmic reticulum membrane. The enzyme catalyses (E,E)-feruperate + reduced [NADPH--hemoprotein reductase] + O2 = (E,E)-piperate + oxidized [NADPH--hemoprotein reductase] + 2 H2O + H(+). It participates in aromatic compound metabolism. In terms of biological role, cytochrome P450 monooxygenase involved in the biosynthesis of aromatic piperamides natural products such as piperine (1-piperoyl-piperidine), the pungent principle contributing, together with several terpenoids, to the aromatic properties of black pepper fruits, and displaying numerous pharmacological activities such as antiproliferative, antitumor, antiangiogenesis, antioxidant, antidiabetic, antiobesity, cardioprotective, antimicrobial, antiaging, and immunomodulatory effects. Catalyzes the conversion of feruperic acid (5-(4-hydroxy-3-methoxyphenyl)-2,4-pentadienoic acid) to piperic acid. Inactive toward ferulic acid and feruperine. The protein is Piperic acid synthase CYP719A37 of Piper nigrum (Black pepper).